A 322-amino-acid chain; its full sequence is Beta-ketoacyl-[acyl-carrier-protein] synthase III (322 aa).

Active-site residues include C113 and H247. Positions 248-252 (QANIR) are ACP-binding. The active site involves N278.

This sequence belongs to the thiolase-like superfamily. FabH family. As to quaternary structure, homodimer.

The protein localises to the cytoplasm. It carries out the reaction malonyl-[ACP] + acetyl-CoA + H(+) = 3-oxobutanoyl-[ACP] + CO2 + CoA. It functions in the pathway lipid metabolism; fatty acid biosynthesis. Its function is as follows. Catalyzes the condensation reaction of fatty acid synthesis by the addition to an acyl acceptor of two carbons from malonyl-ACP. Catalyzes the first condensation reaction which initiates fatty acid synthesis and may therefore play a role in governing the total rate of fatty acid production. Possesses both acetoacetyl-ACP synthase and acetyl transacylase activities. Its substrate specificity determines the biosynthesis of branched-chain and/or straight-chain of fatty acids. The sequence is that of Beta-ketoacyl-[acyl-carrier-protein] synthase III from Tropheryma whipplei (strain TW08/27) (Whipple's bacillus).